The following is a 429-amino-acid chain: Palmitoyltransferase ZDHHC23 (429 aa).

The Cytoplasmic portion of the chain corresponds to 1-81 (MKPVKKKKTE…RIPWLRGAKK (81 aa)). A helical membrane pass occupies residues 82 to 102 (VNISILPPLVLLPVLLRVASW). Position 103 (His103) is a topological domain, lumenal. The helical transmembrane segment at 104–124 (FLLGVVVLTSLPMLALWYYYL) threads the bilayer. The Cytoplasmic portion of the chain corresponds to 125–130 (THRRKE). The chain crosses the membrane as a helical span at residues 131–151 (QTLFFLSLGLFSLGYMYYVFL). Over 152 to 159 (QEVVPQGH) the chain is Lumenal. The chain crosses the membrane as a helical span at residues 160-180 (VGPAQLALLTCGLFLILVALY). Residues 181-296 (RAKKNPGYLS…NSCVGESNHQ (116 aa)) lie on the Cytoplasmic side of the membrane. Residues 212 to 247 (QEKTKGFPGTDTSGSLNNRTLKDDAKGSSRVGLDSP) are disordered. The segment covering 221–230 (TDTSGSLNNR) has biased composition (polar residues). The DHHC domain occupies 253-303 (DWCAKCQLVRPARAWHCRICGICVRRMDHHCVWINSCVGESNHQAFILALS). Catalysis depends on Cys283, which acts as the S-palmitoyl cysteine intermediate. A helical membrane pass occupies residues 297–317 (AFILALSIFLLTSVYGISLTL). The Lumenal segment spans residues 318–347 (NTICRDRSLFTALFYCPGVYANYSSALSFT). The helical transmembrane segment at 348–368 (CVWYSVIITAGMAYIFLIQLI) threads the bilayer. At 369–429 (NISYNVTERE…TVHTPAEDIV (61 aa)) the chain is on the cytoplasmic side. The interaction with NOS1 stretch occupies residues 426-429 (EDIV).

This sequence belongs to the DHHC palmitoyltransferase family. Interacts with NOS1. As to expression, expressed in the brain (at protein level), with highest levels in olfactory bulb, piriform cortex and hippocampus.

The protein resides in the golgi apparatus membrane. The protein localises to the golgi apparatus. Its subcellular location is the trans-Golgi network membrane. It catalyses the reaction L-cysteinyl-[protein] + hexadecanoyl-CoA = S-hexadecanoyl-L-cysteinyl-[protein] + CoA. In terms of biological role, palmitoyltransferase that could catalyze the addition of palmitate onto various protein substrates and be involved in a variety of cellular processes. Palmitoyltransferase that mediates palmitoylation of KCNMA1, regulating localization of KCNMA1 to the plasma membrane. May be involved in NOS1 regulation and targeting to the synaptic membrane. The polypeptide is Palmitoyltransferase ZDHHC23 (Rattus norvegicus (Rat)).